The chain runs to 478 residues: ATP-dependent DNA helicase RecQ (478 aa).

The 175-residue stretch at 28 to 202 folds into the Helicase ATP-binding domain; that stretch reads IDCLLARRDC…VEGLNLRSPE (175 aa). 41-48 serves as a coordination point for ATP; it reads LPTGGGKS. The DEAH box signature appears at 142 to 145; it reads DEAH. The region spanning 229–380 is the Helicase C-terminal domain; the sequence is QLRRFLLKHL…RAEVLSQQIP (152 aa). Positions 447, 467, 470, and 473 each coordinate Zn(2+).

The protein belongs to the helicase family. RecQ subfamily. The cofactor is Mg(2+). It depends on Zn(2+) as a cofactor.

The enzyme catalyses Couples ATP hydrolysis with the unwinding of duplex DNA by translocating in the 3'-5' direction.. The catalysed reaction is ATP + H2O = ADP + phosphate + H(+). Its function is as follows. An ATP-dependent DNA helicase which unwinds DNA in a 3'-5' direction. This Synechocystis sp. (strain ATCC 27184 / PCC 6803 / Kazusa) protein is ATP-dependent DNA helicase RecQ.